Reading from the N-terminus, the 90-residue chain is DNA-binding protein HU-alpha (90 aa).

The protein belongs to the bacterial histone-like protein family. As to quaternary structure, heterodimer of an alpha and a beta chain.

In terms of biological role, histone-like DNA-binding protein which is capable of wrapping DNA to stabilize it, and thus to prevent its denaturation under extreme environmental conditions. The protein is DNA-binding protein HU-alpha (hupA) of Escherichia coli O157:H7.